The sequence spans 365 residues: Gibberellin 20 oxidase 1-B (365 aa).

One can recognise a Fe2OG dioxygenase domain in the interval 199-299; sequence GNDSIMRLNY…RKSLAFFLCP (101 aa). 3 residues coordinate Fe cation: H224, D226, and H280. R290 is a catalytic residue.

The protein belongs to the iron/ascorbate-dependent oxidoreductase family. GA20OX subfamily. Fe cation serves as cofactor. The cofactor is L-ascorbate. In terms of tissue distribution, not detected in nodes and the ear of the elongating stem.

The catalysed reaction is gibberellin A12 + 2 2-oxoglutarate + 3 O2 + H(+) = gibberellin A9 + 2 succinate + 3 CO2 + 2 H2O. It catalyses the reaction gibberellin A53 + 2 2-oxoglutarate + 3 O2 + H(+) = gibberellin A20 + 2 succinate + 3 CO2 + 2 H2O. In terms of biological role, key oxidase enzyme in the biosynthesis of gibberellin that catalyzes the conversion of GA12 and GA53 to GA9 and GA20 respectively, via a three-step oxidation at C-20 of the GA skeleton. In Triticum aestivum (Wheat), this protein is Gibberellin 20 oxidase 1-B (GA20ox1B).